Here is a 497-residue protein sequence, read N- to C-terminus: NAD(P)H-quinone oxidoreductase chain 4, chloroplastic (497 aa).

Helical transmembrane passes span 4–24, 35–55, 87–107, 113–133, 134–154, 167–187, 207–227, 242–262, 274–294, 313–333, 386–406, 416–436, and 462–482; these read LPWL…IPLF, YTLG…CCHF, MGLI…AWPV, LFHF…ASQD, ILLF…LLSI, FILY…TIGL, IALE…KLPI, HYST…YGLI, AIFA…ASLI, MGFV…GAIL, LALP…GIVI, IVIT…LLSM, and IFIS…PNLV.

The protein belongs to the complex I subunit 4 family.

It is found in the plastid. It localises to the chloroplast thylakoid membrane. The catalysed reaction is a plastoquinone + NADH + (n+1) H(+)(in) = a plastoquinol + NAD(+) + n H(+)(out). The enzyme catalyses a plastoquinone + NADPH + (n+1) H(+)(in) = a plastoquinol + NADP(+) + n H(+)(out). The chain is NAD(P)H-quinone oxidoreductase chain 4, chloroplastic from Angiopteris evecta (Mule's foot fern).